Here is a 963-residue protein sequence, read N- to C-terminus: IQ motif and SEC7 domain-containing protein 1 (963 aa).

The disordered stretch occupies residues 21 to 88 (SGVEGEAPSS…TRRPKLQHST (68 aa)). Over residues 29–38 (SSETGTSLDS) the composition is skewed to polar residues. Ser-89, Ser-105, and Ser-107 each carry phosphoserine. Residues 134–163 (TRHAARTIQTAFRQYQMNKNFERLRSSMSE) enclose the IQ domain. A phosphoserine mark is found at Ser-180, Ser-249, and Ser-253. Disordered stretches follow at residues 312 to 332 (LSPP…ESDL) and 349 to 513 (KEDK…RNSW). 2 stretches are compositionally biased toward basic and acidic residues: residues 366–376 (ERQEQRLRVEH) and 430–446 (LPRE…RPLD). A compositionally biased stretch (low complexity) spans 471–489 (DSINSTSNSNDTINCSSES). Phosphoserine occurs at positions 512 and 515. In terms of domain architecture, SEC7 spans 517 to 710 (AFSNDVIRKR…MGIYERIRKR (194 aa)). The 93-residue stretch at 774–866 (HQREIFLFND…LRESIAEVQE (93 aa)) folds into the PH domain. Positions 848 to 879 (QDRKKFTDDLRESIAEVQEMEKHRIESELEKQ) form a coiled coil. Ser-892 bears the Phosphoserine mark. A Phosphotyrosine modification is found at Tyr-911. The interval 922–947 (LSSSLRDLSEAGKRGRRSSAGSLESN) is disordered. A phosphoserine mark is found at Ser-924 and Ser-925.

Belongs to the BRAG family. In terms of assembly, interacts with ARF1 and ARF6. Interacts with GRIA2; the interaction is required for ARF6 activation. Expressed in brain, ovary, heart, lung, liver, kidney and leukocytes. Moderate expression was also detected in lung, skeletal muscle, placenta, small intestine, pancreas, spleen and testis.

The protein localises to the cytoplasm. The protein resides in the nucleus. It localises to the postsynaptic density. Its subcellular location is the cytoplasmic vesicle. It is found in the secretory vesicle. The protein localises to the synaptic vesicle. Functionally, guanine nucleotide exchange factor for ARF1 and ARF6. Guanine nucleotide exchange factor activity is enhanced by lipid binding. Accelerates GTP binding by ARFs of all three classes. Guanine nucleotide exchange protein for ARF6, mediating internalization of beta-1 integrin. Involved in neuronal development. In neurons, plays a role in the control of vesicle formation by endocytoc cargo. Upon long term depression, interacts with GRIA2 and mediates the activation of ARF6 to internalize synaptic AMPAR receptors. This is IQ motif and SEC7 domain-containing protein 1 from Homo sapiens (Human).